The chain runs to 293 residues: Neugrin (293 aa).

The N-terminal stretch at 1–18 (MALSLSLFLGGRVRTSLA) is a signal peptide. S41 is subject to Phosphoserine. Disordered stretches follow at residues 177 to 210 (DEVS…EGRD) and 224 to 254 (TTAL…TLPS). N-linked (GlcNAc...) asparagine glycosylation is present at N185. Basic and acidic residues predominate over residues 198-210 (HSTDAQKKREGRD).

The protein belongs to the neugrin family. In terms of assembly, forms a regulatory protein-RNA complex, consisting of RCC1L, NGRN, RPUSD3, RPUSD4, TRUB2, FASTKD2 and 16S mt-rRNA. Interacts with 16S mt-rRNA; this interaction is direct. As to expression, expressed in heart, brain, liver and kidney. In brain, mainly expressed in neurons rather than glial cells.

The protein resides in the nucleus. It is found in the secreted. It localises to the mitochondrion membrane. In terms of biological role, plays an essential role in mitochondrial ribosome biogenesis. As a component of a functional protein-RNA module, consisting of RCC1L, NGRN, RPUSD3, RPUSD4, TRUB2, FASTKD2 and 16S mitochondrial ribosomal RNA (16S mt-rRNA), controls 16S mt-rRNA abundance and is required for intra-mitochondrial translation of core subunits of the oxidative phosphorylation system. In Mus musculus (Mouse), this protein is Neugrin (Ngrn).